A 102-amino-acid chain; its full sequence is Large ribosomal subunit protein bL21 (102 aa).

The protein belongs to the bacterial ribosomal protein bL21 family. Part of the 50S ribosomal subunit. Contacts protein L20.

Functionally, this protein binds to 23S rRNA in the presence of protein L20. The sequence is that of Large ribosomal subunit protein bL21 from Leifsonia xyli subsp. xyli (strain CTCB07).